The primary structure comprises 399 residues: Tryptophan synthase beta chain (399 aa).

At Lys92 the chain carries N6-(pyridoxal phosphate)lysine.

This sequence belongs to the TrpB family. In terms of assembly, tetramer of two alpha and two beta chains. The cofactor is pyridoxal 5'-phosphate.

It carries out the reaction (1S,2R)-1-C-(indol-3-yl)glycerol 3-phosphate + L-serine = D-glyceraldehyde 3-phosphate + L-tryptophan + H2O. It functions in the pathway amino-acid biosynthesis; L-tryptophan biosynthesis; L-tryptophan from chorismate: step 5/5. The beta subunit is responsible for the synthesis of L-tryptophan from indole and L-serine. The protein is Tryptophan synthase beta chain of Oceanobacillus iheyensis (strain DSM 14371 / CIP 107618 / JCM 11309 / KCTC 3954 / HTE831).